A 46-amino-acid chain; its full sequence is Light-harvesting protein B800/850/890 alpha-1 chain (46 aa).

Topologically, residues Met-1–Arg-12 are cytoplasmic. Residues Val-13–Leu-33 form a helical membrane-spanning segment. His-29 is an a bacteriochlorophyll binding site. Residues Ser-34–Asn-46 lie on the Periplasmic side of the membrane.

The protein belongs to the antenna complex alpha subunit family. As to quaternary structure, the core complex is formed by different alpha and beta chains, binding bacteriochlorophyll molecules, and arranged most probably in tetrameric structures disposed around the reaction center. The non-pigmented gamma chains may constitute additional components.

It is found in the cell inner membrane. Functionally, antenna complexes are light-harvesting systems, which transfer the excitation energy to the reaction centers. In Halorhodospira halophila (strain DSM 244 / SL1) (Ectothiorhodospira halophila (strain DSM 244 / SL1)), this protein is Light-harvesting protein B800/850/890 alpha-1 chain.